A 209-amino-acid polypeptide reads, in one-letter code: Nucleoside triphosphate pyrophosphatase (209 aa).

Residue Asp74 is the Proton acceptor of the active site.

The protein belongs to the Maf family. Requires a divalent metal cation as cofactor.

The protein localises to the cytoplasm. It carries out the reaction a ribonucleoside 5'-triphosphate + H2O = a ribonucleoside 5'-phosphate + diphosphate + H(+). The enzyme catalyses a 2'-deoxyribonucleoside 5'-triphosphate + H2O = a 2'-deoxyribonucleoside 5'-phosphate + diphosphate + H(+). Nucleoside triphosphate pyrophosphatase. May have a dual role in cell division arrest and in preventing the incorporation of modified nucleotides into cellular nucleic acids. In Neorickettsia sennetsu (strain ATCC VR-367 / Miyayama) (Ehrlichia sennetsu), this protein is Nucleoside triphosphate pyrophosphatase.